Here is a 503-residue protein sequence, read N- to C-terminus: Puromycin resistance protein pur8 (503 aa).

Residues 1–24 are Cytoplasmic-facing; that stretch reads MARKPDISAVPVESAACQGPDPRR. The chain crosses the membrane as a helical span at residues 25–45; it reads WWGLVVILAAQLLVVLDGTVV. Residues 46 to 64 lie on the Extracellular side of the membrane; the sequence is NIALPSVQRDLGMSDTSRQ. A helical transmembrane segment spans residues 65–85; sequence WVITAYTLAFGGLLLLGGRVA. Topologically, residues 86 to 92 are cytoplasmic; that stretch reads DAFGRRR. Residues 93-113 form a helical membrane-spanning segment; sequence IFAVGILGFGLASLLGGAAPD. At 114-122 the chain is on the extracellular side; sequence PGTLFLARA. Residues 123–143 traverse the membrane as a helical segment; it reads LQGVFAAALAPAALALINTLF. At 144–152 the chain is on the cytoplasmic side; the sequence is TEPGERGKA. Residues 153-173 form a helical membrane-spanning segment; that stretch reads FGVYGAVSGGGAAVGLLAGGL. The Extracellular portion of the chain corresponds to 174–181; the sequence is LTEYLDWR. The chain crosses the membrane as a helical span at residues 182-202; that stretch reads WCLYVNAPVALLALLGCRLLP. The Cytoplasmic segment spans residues 203 to 212; the sequence is RDRRTGRAVR. The chain crosses the membrane as a helical span at residues 213–233; that stretch reads LDLPGTLLGCGGLVAIVYAFA. At 234–241 the chain is on the extracellular side; that stretch reads EAESGWGD. The helical transmembrane segment at 242–262 threads the bilayer; that stretch reads PLVVRLLVLGVLMLVAFALVE. The Cytoplasmic portion of the chain corresponds to 263-280; that stretch reads RRVQDPLLPPGVVAHRVR. The helical transmembrane segment at 281 to 301 threads the bilayer; it reads GGSFLVVGLPQIGLFGLFLFL. Residues 302-313 are Extracellular-facing; it reads TYYLQGILDYSP. Residues 314–334 traverse the membrane as a helical segment; it reads VLTGVAFLPLGLGIAVGSSLI. The Cytoplasmic portion of the chain corresponds to 335 to 346; sequence AARLLPRTRPRT. Residues 347–367 form a helical membrane-spanning segment; sequence LIVGALLAAAAGMALLTRLEP. The Extracellular portion of the chain corresponds to 368–371; it reads DTPQ. Residues 372 to 392 form a helical membrane-spanning segment; it reads VYLTHLLPAQILIGLGIGCMM. Residues 393-422 lie on the Cytoplasmic side of the membrane; sequence MPAMHTATARVAPHEAGAAAAVVNSAQQVG. A helical transmembrane segment spans residues 423-443; that stretch reads GALGVALLNTVSTGATAAYLA. Topologically, residues 444-461 are extracellular; it reads DHGTSPAATVDGTVHGYT. The chain crosses the membrane as a helical span at residues 462–482; it reads VAIAFAVGVLLLTAVLAWVLI. The Cytoplasmic segment spans residues 483 to 503; sequence DSRTEAADETGSASVTPARPR.

Belongs to the major facilitator superfamily. EmrB family.

The protein localises to the cell membrane. In terms of biological role, may be involved in active puromycin efflux energized by a proton-dependent electrochemical gradient. In addition, it could be implicated in secreting N-acetylpuromycin, the last intermediate of the puromycin biosynthesis pathway, to the environment. This chain is Puromycin resistance protein pur8 (pur8), found in Streptomyces alboniger.